Consider the following 485-residue polypeptide: NADH-quinone oxidoreductase subunit N (485 aa).

Transmembrane regions (helical) follow at residues 8–28 (LIAL…MLSI), 35–55 (FLNA…LWFV), 71–91 (GFAM…CTFA), 105–125 (FYLL…ANHL), 127–147 (SLFL…GYAF), 159–179 (YTIL…LVYA), 203–223 (LLAG…LVPF), 235–255 (PAPV…GVVM), 271–291 (VVLA…ALSQ), 297–317 (LLGY…IALQ), 326–346 (VGVY…VVSL), 373–393 (AAVM…LGFI), 408–430 (WWLV…RVAV), and 455–475 (IVVL…QPLI).

The protein belongs to the complex I subunit 2 family. As to quaternary structure, NDH-1 is composed of 13 different subunits. Subunits NuoA, H, J, K, L, M, N constitute the membrane sector of the complex.

It localises to the cell inner membrane. The enzyme catalyses a quinone + NADH + 5 H(+)(in) = a quinol + NAD(+) + 4 H(+)(out). In terms of biological role, NDH-1 shuttles electrons from NADH, via FMN and iron-sulfur (Fe-S) centers, to quinones in the respiratory chain. The immediate electron acceptor for the enzyme in this species is believed to be ubiquinone. Couples the redox reaction to proton translocation (for every two electrons transferred, four hydrogen ions are translocated across the cytoplasmic membrane), and thus conserves the redox energy in a proton gradient. This Escherichia coli O6:K15:H31 (strain 536 / UPEC) protein is NADH-quinone oxidoreductase subunit N.